Consider the following 78-residue polypeptide: Large ribosomal subunit protein bL28 (78 aa).

Belongs to the bacterial ribosomal protein bL28 family.

This chain is Large ribosomal subunit protein bL28, found in Prochlorococcus marinus (strain MIT 9515).